Reading from the N-terminus, the 203-residue chain is Ras-related protein Rab5A (203 aa).

18 to 26 contacts GTP; that stretch reads GDVGTGKSS. The Effector region signature appears at 40-48; that stretch reads QESTIGAAF. GTP contacts are provided by residues 66-70, 124-127, and 154-155; these read DTAGQ, NKAD, and SA. Residues Cys-201 and Cys-202 are each lipidated (S-geranylgeranyl cysteine).

It belongs to the small GTPase superfamily. Rab family. In terms of assembly, interacts with VPS9A. Interacts with NSF and RBP-L. Highly expressed in roots. Expressed at low levels in shoots, flowers and grains.

Its subcellular location is the prevacuolar compartment membrane. The protein resides in the golgi apparatus membrane. The protein localises to the cell membrane. It is found in the protein storage vacuole membrane. Plays an important role in intracellular trafficking of seed storage proteins to the protein storage vacuoles (PSVs). Participates in the transport of the proglutelins from the Golgi apparatus to the PSVs in endosperm. Functions cooperatively with VPS9A to regulate post-Golgi dense vesicle-mediated transport of storage proteins to the type II protein bodies (PBII) protein storage vacuoles in developing endosperm. Involved in the maintenance of the general structural organization of the endomembrane system in developing endosperm. Binds GTP in vitro. Forms a quaternary complex with the two glutelin zipcode RNA-binding proteins RBP-L and RBP-P, and the membrane trafficking factor NSF. This quaternay complex carries glutelin mRNAs for active transport on endosomes to the cortical endoplasmic reticulum membrane, and enables endosome-mediated glutelin mRNA transport in endosperm cells. The sequence is that of Ras-related protein Rab5A from Oryza sativa subsp. japonica (Rice).